A 181-amino-acid chain; its full sequence is MKKTLLAIILGGMAFATTNASANTGTINFNGKITSATCTIDPEVNGNRTSTIDLGQAAISGHGTVVDFKLKPAPGSNDCLAKTNARIDWSGSMNSLGFNNTASGNTAAKGYHMTLRATNVGNGSGGANINTSFTTAEYTHTSAIQSFNYSAQLKKDDRAPSNGGYKAGVFTTSASFLVTYM.

Positions 1–22 (MKKTLLAIILGGMAFATTNASA) are cleaved as a signal peptide. A disulfide bridge links Cys-38 with Cys-79.

Belongs to the fimbrial protein family.

It is found in the fimbrium. Its function is as follows. Fimbriae (also called pili), polar filaments radiating from the surface of the bacterium to a length of 0.5-1.5 micrometers and numbering 100-300 per cell, enable bacteria to colonize the epithelium of specific host organs. FanC is the main component of the K99 fimbriae. The sequence is that of K99 fimbrial protein (fanC) from Escherichia coli.